Here is a 1528-residue protein sequence, read N- to C-terminus: Multidrug resistance-associated protein 1 (1528 aa).

Residues 1-33 (MALRSFCSADGSDPLWDWNVTWHTSNPDFTKCF) lie on the Extracellular side of the membrane. Asparagine 19 carries N-linked (GlcNAc...) asparagine glycosylation. A helical membrane pass occupies residues 34–54 (QNTVLTWVPCFYLWSCFPLYF). Residues 55-74 (FYLSRHDRGYIQMTHLNKTK) are Cytoplasmic-facing. The helical transmembrane segment at 75-95 (TALGFFLWIICWADLFYSFWE) threads the bilayer. The Extracellular portion of the chain corresponds to 96–100 (RSQGV). A helical membrane pass occupies residues 101–121 (LRAPVLLVSPTLLGITMLLAT). Topologically, residues 122 to 133 (FLIQLERRKGVQ) are cytoplasmic. A helical transmembrane segment spans residues 134–154 (SSGIMLTFWLVALLCALAILR). Residues 155–172 (SKIISALKKDAHVDVFRD) lie on the Extracellular side of the membrane. Residues 173-193 (STFYLYFTLVLVQLVLSCFSD) traverse the membrane as a helical segment. Topologically, residues 194-317 (CSPLFSETVH…KDREPSLFKV (124 aa)) are cytoplasmic. Residue tyrosine 277 is modified to Phosphotyrosine. At serine 290 the chain carries Phosphoserine. The helical transmembrane segment at 318 to 338 (LYKTFGPYFLMSFLYKALHDL) threads the bilayer. One can recognise an ABC transmembrane type-1 1 domain in the interval 326-609 (FLMSFLYKAL…LPMVISSIVQ (284 aa)). Topologically, residues 339 to 364 (MMFAGPKILELIINFVNDREAPDWQG) are extracellular. Residues 365–385 (YFYTALLFVSACLQTLALHQY) form a helical membrane-spanning segment. At 386–441 (FHICFVSGMRIKTAVVGAVYRKALLITNAARKSSTVGEIVNLMSVDAQRFMDLATY) the chain is on the cytoplasmic side. A helical transmembrane segment spans residues 442-462 (INMIWSAPLQVILALYFLWLS). The Extracellular portion of the chain corresponds to 463 to 465 (LGP). A helical membrane pass occupies residues 466 to 486 (SVLAGVAVMILMVPLNAVMAM). Over 487–548 (KTKTYQVAHM…VLKKSAYLAA (62 aa)) the chain is Cytoplasmic. Lysine 504 carries the post-translational modification N6-succinyllysine. Residues 549-569 (VGTFTWVCTPFLVALSTFAVF) traverse the membrane as a helical segment. Residues 570-591 (VTVDERNILDAKKAFVSLALFN) are Extracellular-facing. A helical transmembrane segment spans residues 592 to 612 (ILRFPLNILPMVISSIVQASV). Residues 613–963 (SLKRLRIFLS…VQLSVYWNYM (351 aa)) are Cytoplasmic-facing. An ABC transporter 1 domain is found at 644–868 (ITVKNATFTW…DGAFAEFLRT (225 aa)). An ATP-binding site is contributed by 678-685 (GQVGCGKS). Disordered regions lie at residues 876 to 895 (LASEDDSVSGSGKESKPVEN) and 909 to 929 (RHLSNSSSHSGDTSQQHSSIA). 4 positions are modified to phosphoserine: serine 878, serine 882, serine 912, and serine 927. Residues 910–929 (HLSNSSSHSGDTSQQHSSIA) are compositionally biased toward polar residues. The chain crosses the membrane as a helical span at residues 964–984 (KAIGLFITFLSIFLFLCNHVS). Residues 971–1253 (TFLSIFLFLC…LVRMSSEMET (283 aa)) enclose the ABC transmembrane type-1 2 domain. Residues 985–1022 (ALASNYWLSLWTDDPPVVNGTQANRNFRLSVYGALGIL) are Extracellular-facing. Asparagine 1003 carries an N-linked (GlcNAc...) asparagine glycan. A helical membrane pass occupies residues 1023-1043 (QGAAIFGYSMAVSIGGIFASR). At 1044-1086 (RLHLDLLYNVLRSPMSFFERTPSGNLVNRFSKELDTVDSMIPQ) the chain is on the cytoplasmic side. A helical transmembrane segment spans residues 1087 to 1107 (VIKMFMGSLFSVIGAVIIILL). A topological domain (extracellular) is located at residue alanine 1108. The chain crosses the membrane as a helical span at residues 1109-1129 (TPIAAVIIPPLGLVYFFVQRF). Residues 1130–1200 (YVASSRQLKR…VANRWLAVRL (71 aa)) lie on the Cytoplasmic side of the membrane. Residues 1201–1221 (ECVGNCIVLFAALFAVISRHS) form a helical membrane-spanning segment. The Extracellular segment spans residues 1222 to 1223 (LS). The chain crosses the membrane as a helical span at residues 1224–1244 (AGLVGLSVSYSLQITAYLNWL). At 1245–1528 (VRMSSEMETN…YSMAKDAGLV (284 aa)) the chain is on the cytoplasmic side. The ABC transporter 2 domain occupies 1290–1524 (VEFRDYCLRY…RGIFYSMAKD (235 aa)). 1324–1331 (GRTGAGKS) is an ATP binding site.

Belongs to the ABC transporter superfamily. ABCC family. Conjugate transporter (TC 3.A.1.208) subfamily.

It localises to the cell membrane. It is found in the basolateral cell membrane. The catalysed reaction is ATP + H2O + xenobioticSide 1 = ADP + phosphate + xenobioticSide 2.. The enzyme catalyses an S-substituted glutathione(in) + ATP + H2O = an S-substituted glutathione(out) + ADP + phosphate + H(+). It carries out the reaction leukotriene C4(in) + ATP + H2O = leukotriene C4(out) + ADP + phosphate + H(+). It catalyses the reaction sphing-4-enine 1-phosphate(in) + ATP + H2O = sphing-4-enine 1-phosphate(out) + ADP + phosphate + H(+). The catalysed reaction is 17beta-estradiol 17-O-(beta-D-glucuronate)(in) + ATP + H2O = 17beta-estradiol 17-O-(beta-D-glucuronate)(out) + ADP + phosphate + H(+). The enzyme catalyses vincristine(in) + ATP + H2O = vincristine(out) + ADP + phosphate + H(+). It carries out the reaction daunorubicin(in) + ATP + H2O = daunorubicin(out) + ADP + phosphate + H(+). It catalyses the reaction 2',3'-cGAMP(in) + ATP + H2O = 2',3'-cGAMP(out) + ADP + phosphate + H(+). The catalysed reaction is S-[(2E,6E,10E)-geranylgeranyl]-L-glutathione(in) + ATP + H2O = S-[(2E,6E,10E)-geranylgeranyl]-L-glutathione(out) + ADP + phosphate + H(+). The enzyme catalyses prostaglandin A2-S-(R)-glutathione(in) + ATP + H2O = prostaglandin A2-S-(R)-glutathione(out) + ADP + phosphate + H(+). It carries out the reaction prostaglandin A2-S-(S)-glutathione(in) + ATP + H2O = prostaglandin A2-S-(S)-glutathione(out) + ADP + phosphate + H(+). MK 571 inhibits sphingosine 1-phosphate and leukotriene C4 export. In terms of biological role, mediates export of organic anions and drugs from the cytoplasm. Mediates ATP-dependent transport of glutathione and glutathione conjugates, leukotriene C4, estradiol-17-beta-o-glucuronide, methotrexate, antiviral drugs and other xenobiotics. Confers resistance to anticancer drugs by decreasing accumulation of drugs in cells, and by mediating ATP- and GSH-dependent drug export. Hydrolyzes ATP with low efficiency. Catalyzes the export of sphingosine 1-phosphate from mast cells independently of their degranulation. Participates in inflammatory response by allowing export of leukotriene C4 from leukotriene C4-synthesizing cells. Mediates ATP-dependent, GSH-independent cyclic GMP-AMP (cGAMP) export. Thus, by limiting intracellular cGAMP concentrations negatively regulates the cGAS-STING pathway. Exports S-geranylgeranyl-glutathione (GGG) in lymphoid cells and stromal compartments of lymphoid organs. ABCC1 (via extracellular transport) with GGT5 (via GGG catabolism) establish GGG gradients within lymphoid tissues to position P2RY8-positive lymphocytes at germinal centers in lymphoid follicles and restrict their chemotactic transmigration from blood vessels to the bone marrow parenchyma. Mediates basolateral export of GSH-conjugated R- and S-prostaglandin A2 diastereomers in polarized epithelial cells. The polypeptide is Multidrug resistance-associated protein 1 (Mus musculus (Mouse)).